The chain runs to 572 residues: Sulfite reductase [NADPH] hemoprotein beta-component (572 aa).

Residues Cys-437, Cys-443, Cys-482, and Cys-486 each contribute to the [4Fe-4S] cluster site. Cys-486 lines the siroheme pocket.

It belongs to the nitrite and sulfite reductase 4Fe-4S domain family. In terms of assembly, alpha(8)-beta(8). The alpha component is a flavoprotein, the beta component is a hemoprotein. It depends on siroheme as a cofactor. The cofactor is [4Fe-4S] cluster.

The catalysed reaction is hydrogen sulfide + 3 NADP(+) + 3 H2O = sulfite + 3 NADPH + 4 H(+). It functions in the pathway sulfur metabolism; hydrogen sulfide biosynthesis; hydrogen sulfide from sulfite (NADPH route): step 1/1. Its function is as follows. Component of the sulfite reductase complex that catalyzes the 6-electron reduction of sulfite to sulfide. This is one of several activities required for the biosynthesis of L-cysteine from sulfate. This is Sulfite reductase [NADPH] hemoprotein beta-component from Bacillus licheniformis (strain ATCC 14580 / DSM 13 / JCM 2505 / CCUG 7422 / NBRC 12200 / NCIMB 9375 / NCTC 10341 / NRRL NRS-1264 / Gibson 46).